Consider the following 859-residue polypeptide: MGEVTAEEVEKFLDSNVSFAKQYYNLRYRAKVISDLLGPREAAVDFSNYHALNSVEESEIIFDLLRDFQDNLQAEKCVFNVMKKLCFLLQADRMSLFMYRARNGIAELATRLFNVHKDAVLEECLVAPDSEIVFPLDMGVVGHVALSKKIVNVPNTEEDEHFCDFVDTLTEYQTKNILASPIMNGKDVVAIIMVVNKVDGPHFTENDEEILLKYLNFANLIMKVFHLSYLHNCETRRGQILLWSGSKVFEELTDIERQFHKALYTVRAFLNCDRYSVGLLDMTKQKEFFDVWPVLMGEAPPYAGPRTPDGREINFYKVIDYILHGKEDIKVIPNPPPDHWALVSGLPTYVAQNGLICNIMNAPSEDFFAFQKEPLDESGWMIKNVLSMPIVNKKEEIVGVATFYNRKDGKPFDEMDETLMESLTQFLGWSVLNPDTYELMNKLENRKDIFQDMVKYHVKCDNEEIQTILKTREVYGKEPWECEEEELAEILQGELPDADKYEINKFHFSDLPLTELELVKCGIQMYYELKVVDKFHIPQEALVRFMYSLSKGYRRITYHNWRHGFNVGQTMFSLLVTGKLKRYFTDLEALAMVTAAFCHDIDHRGTNNLYQMKSQNPLAKLHGSSILERHHLEFGKTLLRDESLNIFQNLNRRQHEHAIHMMDIAIIATDLALYFKKRTMFQKIVDQSKTYETQQEWTQYMMLDQTRKEIVMAMMMTACDLSAITKPWEVQSKVALLVAAEFWEQGDLERTVLQQNPIPMMDRNKADELPKLQVGFIDFVCTFVYKEFSRFHEEITPMLDGITNNRKEWKALADEYETKMKGLEEEKQKQQAANQAAAGSQHGGKQPGGGPASKSCCVQ.

Position 2 is an N-acetylglycine (Gly-2). 2 GAF domains span residues 73 to 222 (QAEK…NLIM) and 254 to 431 (DIER…GWSV). In terms of domain architecture, PDEase spans 483-816 (EEEELAEILQ…KEWKALADEY (334 aa)). His-559 acts as the Proton donor in catalysis. The a divalent metal cation site is built by His-563, His-599, Asp-600, and Asp-720. The interval 821 to 859 (KGLEEEKQKQQAANQAAAGSQHGGKQPGGGPASKSCCVQ) is disordered. The span at 830–840 (QQAANQAAAGS) shows a compositional bias: low complexity. Positions 841–851 (QHGGKQPGGGP) are enriched in gly residues. A Cysteine methyl ester modification is found at Cys-856. Cys-856 carries S-farnesyl cysteine lipidation. The propeptide at 857–859 (CVQ) is removed in mature form.

The protein belongs to the cyclic nucleotide phosphodiesterase family. In terms of assembly, oligomer composed of two catalytic chains (alpha and beta), an inhibitory chain (gamma) and the delta chain. A divalent metal cation is required as a cofactor.

Its subcellular location is the cell membrane. The protein resides in the cell projection. It is found in the cilium. It localises to the photoreceptor outer segment. The catalysed reaction is 3',5'-cyclic GMP + H2O = GMP + H(+). Functionally, rod-specific cGMP phosphodiesterase that catalyzes the hydrolysis of 3',5'-cyclic GMP. This protein participates in processes of transmission and amplification of the visual signal. The polypeptide is Rod cGMP-specific 3',5'-cyclic phosphodiesterase subunit alpha (Bos taurus (Bovine)).